Consider the following 423-residue polypeptide: Probable histone-binding protein rbbD (423 aa).

6 WD repeats span residues 119–159, 172–212, 222–262, 266–306, 310–350, and 367–407; these read NHEG…LEPT, GHKK…KSDS, GHTS…KPIH, AHNS…NRLH, SHTD…EEQN, and GHTS…YNDR.

It belongs to the WD repeat RBAP46/RBAP48/MSI1 family. In terms of assembly, probably binds directly to helix 1 of the histone fold of histone H4, a region that is not accessible when H4 is in chromatin.

Its subcellular location is the nucleus. Its function is as follows. Core histone-binding subunit that may target chromatin assembly factors, chromatin remodeling factors and histone deacetylases to their histone substrates in a manner that is regulated by nucleosomal DNA. Component of several complexes which regulate chromatin metabolism. This chain is Probable histone-binding protein rbbD (rbbD), found in Dictyostelium discoideum (Social amoeba).